The primary structure comprises 374 residues: Transaldolase (374 aa).

Lys-140 functions as the Schiff-base intermediate with substrate in the catalytic mechanism.

It belongs to the transaldolase family. Type 2 subfamily.

The protein resides in the cytoplasm. The enzyme catalyses D-sedoheptulose 7-phosphate + D-glyceraldehyde 3-phosphate = D-erythrose 4-phosphate + beta-D-fructose 6-phosphate. The protein operates within carbohydrate degradation; pentose phosphate pathway; D-glyceraldehyde 3-phosphate and beta-D-fructose 6-phosphate from D-ribose 5-phosphate and D-xylulose 5-phosphate (non-oxidative stage): step 2/3. Its function is as follows. Transaldolase is important for the balance of metabolites in the pentose-phosphate pathway. The polypeptide is Transaldolase (Renibacterium salmoninarum (strain ATCC 33209 / DSM 20767 / JCM 11484 / NBRC 15589 / NCIMB 2235)).